Reading from the N-terminus, the 761-residue chain is Subtilisin-like protease SBT3 (761 aa).

A signal peptide spans 1–22 (MELLHLLLFSWALSAHLFLALA). The propeptide occupies 23–112 (QRSTYIVHLD…AYKDRTVEPH (90 aa)). Residues 26-110 (TYIVHLDKSL…ISAYKDRTVE (85 aa)) form the Inhibitor I9 domain. Residues 116 to 606 (TSDFLKLNPS…AGHVDPNRAL (491 aa)) enclose the Peptidase S8 domain. Aspartate 144 acts as the Charge relay system in catalysis. An intrachain disulfide couples cysteine 170 to cysteine 181. N-linked (GlcNAc...) (complex) asparagine; alternate glycosylation is found at asparagine 177 and asparagine 203. Asparagine 177 and asparagine 203 each carry an N-linked (GlcNAc...) (paucimannose) asparagine; alternate glycan. The active-site Charge relay system is histidine 215. Asparagine 376 carries an N-linked (GlcNAc...) (paucimannose) asparagine; partial glycan. A disulfide bond links cysteine 382 and cysteine 401. The active-site Charge relay system is serine 538. Residues 574 to 598 (LDNTRKPIKDSDNNKAATPLDMGAG) form a disordered region. The segment covering 575 to 586 (DNTRKPIKDSDN) has biased composition (basic and acidic residues). Cysteine 624 and cysteine 645 are oxidised to a cystine. N-linked (GlcNAc...) (complex) asparagine; alternate glycans are attached at residues asparagine 697 and asparagine 745. N-linked (GlcNAc...) (paucimannose) asparagine; alternate glycans are attached at residues asparagine 697 and asparagine 745. The interval 756-761 (PIIEVW) is necessary for prodomain cleavage and secretion.

It belongs to the peptidase S8 family. Homodimer. Propeptide is internally cleaved at Asn-38 and Asp-52 in a pH-dependent manner leading to the dissociation of the propeptide from the catalytic domain and resulting in the release of the active subtilase. Cleavage occurs at pH 5.7 and to a stronger extent at pH 5.2. Expressed in flowers, cotyledons and leaves with the highest expression in roots.

Its subcellular location is the secreted. Inhibited by 1 mM 4-(2-aminoethyl)-benzenesulfonyl fluoride (AEBSF), a general inhibitor of serine proteinases, but not by the more selective serine protease inhibitors N-alpha-tosyl-L-lysinyl-chloromethylketone (TLCK), N-tosyl-L-phenylalaninyl-chloromethylketone (TPCK), leupeptin, aprotinin or benzamidine. Its proteolytic activity is autoinhibited by the non-covalent binding of the propeptide to the catalytic domain. No effect on activity by the addition of CaCl(2) or calcium chelators. Its function is as follows. Serine protease. Has preference for Gln in the P1 position and Lys in the P2 position of oligopeptide substrates. Active also with His in the P1 position. Involved in resistance against insects partly by regulating expression of systemic wound response genes and possibly by its post-ingestive activity in the insect gut. Apart from the role in defense, may be involved in regulation of pectin methylesterases (PMEs) activity and pectin methylesterification of the cell wall. The sequence is that of Subtilisin-like protease SBT3 from Solanum lycopersicum (Tomato).